The primary structure comprises 383 residues: Non-structural maintenance of chromosomes element 4 homolog B (383 aa).

Over residues 1 to 22 (MRNSVKWETELTGDRSRRREAD) the composition is skewed to basic and acidic residues. Disordered regions lie at residues 1–59 (MRNS…EQGI), 198–231 (MKQR…EKKS), and 355–383 (QGSV…NGGL). The span at 201–212 (RKSRVGNRKRTK) shows a compositional bias: basic residues. Positions 355 to 372 (QGSVIQEETVVEDSSNME) are enriched in polar residues.

Belongs to the NSE4 family. In terms of assembly, interacts with SMC5, SMC6A or SMC6B. The SMC5-SMC6 complex is composed of the SMC5 and SMC6 heterodimer attached via their hinge domain and from the non-SMC subunit NSE4A or NSE4B. As to expression, not expressed in seedlings, rosette leaves and floral buds.

The protein localises to the nucleus. Functionally, component of the SMC5-SMC6 complex, that promotes sister chromatid alignment after DNA damage and facilitates double-stranded DNA breaks (DSBs) repair via homologous recombination between sister chromatids. The chain is Non-structural maintenance of chromosomes element 4 homolog B (NSE4B) from Arabidopsis thaliana (Mouse-ear cress).